A 262-amino-acid chain; its full sequence is MYFAVIGAHVRGKSASPAMHTASFKALGINAVYIAVDVPKEELGCFAQIARLNFRGFNVTIPHKEEVVKFLDALSAEARAIGAVNTVLVERNLMVGYNTDAHAVYKLAGGHMEGAEVLILGAGGAARAALFAAIKAGAKKIYVKNRTAERAEALAREFREKFERPIEAIPWSGAVKADVVINATPIHDAVIADLTGASLYVEFVYTPTPRTKMVEEAERLGVKVVDGVDLLVEQGAQAEKIWLGVEPDRAVMKKAVLEFLGL.

Residues 14–16 and threonine 60 contribute to the shikimate site; that span reads SAS. The Proton acceptor role is filled by lysine 64. Residues asparagine 85 and aspartate 100 each coordinate shikimate. NADP(+) contacts are provided by residues 121 to 125, 145 to 150, and phenylalanine 203; these read GAGGA and NRTAER. Tyrosine 205 contacts shikimate. Position 227 (glycine 227) interacts with NADP(+).

This sequence belongs to the shikimate dehydrogenase family. As to quaternary structure, homodimer.

It catalyses the reaction shikimate + NADP(+) = 3-dehydroshikimate + NADPH + H(+). It participates in metabolic intermediate biosynthesis; chorismate biosynthesis; chorismate from D-erythrose 4-phosphate and phosphoenolpyruvate: step 4/7. In terms of biological role, involved in the biosynthesis of the chorismate, which leads to the biosynthesis of aromatic amino acids. Catalyzes the reversible NADPH linked reduction of 3-dehydroshikimate (DHSA) to yield shikimate (SA). In Pyrobaculum aerophilum (strain ATCC 51768 / DSM 7523 / JCM 9630 / CIP 104966 / NBRC 100827 / IM2), this protein is Shikimate dehydrogenase (NADP(+)).